The sequence spans 264 residues: MQSLNVNGTLMTYSESGDPHAPTLFLLSGWCQDHRLFKNLAPLLARDFHVICPDWRGHDAKQTDSGDFDSQTLAQDLLAFIDAKGIRDFQMVSTSHGCWVNIDVCEQLGAARLPKTIVIDWLLQPHPGFWQQLAEGQHPTEYVAGRQSFFDEWAETTDNADVLNHLRNEMPWFHGEMWQRACREIEANYRTWGSPLDRMESLPQKPEICHIYSQPLSQDYRQLQLDFAAGHSWFHPRHIPGRTHFPSLENPVAVAQAIREFLQA.

Residues 30 to 32, 94 to 95, and W153 each bind substrate; these read WCQ and TS. The active-site Proton donor/acceptor is H244.

It belongs to the AB hydrolase superfamily. The cofactor is None. Contrary to most other dioxygenases, this enzyme does not require a cofactor for catalysis..

The catalysed reaction is 3-hydroxy-1H-quinolin-4-one + O2 = N-formylanthranilate + CO + H(+). Its function is as follows. Ring-cleaving dioxygenase involved in oxoquinoline degradation and utilization. The sequence is that of 1H-3-hydroxy-4-oxoquinoline 2,4-dioxygenase (qdo) from Pseudomonas putida (Arthrobacter siderocapsulatus).